Reading from the N-terminus, the 353-residue chain is Guanine nucleotide-binding protein subunit beta-5 (353 aa).

7 WD repeats span residues 61 to 100 (GHGN…KEHA), 103 to 142 (MPCT…NENM), 151 to 192 (MHTN…QSFH), 194 to 236 (HGAD…QAFE), 237 to 276 (THES…EVAI), 278 to 320 (SKES…RVSI), and 323 to 352 (GHEN…LRVW).

It belongs to the WD repeat G protein beta family. Component of a complex composed of RGS9 (isoform RGS9-1), GNB5 and RGS9BP; within this complex, the presence of GNB5 stabilizes both itself and RGS9 and increases RGS9 GTPase-activating protein (GAP) activity. Interacts with RGS7, forming the RGS7-GNB5 complex; within this complex, the presence of GNB5 increases RGS7 GTPase-activating protein (GAP) activity. Interacts with GPR158; promotes the GTPase activator activity of the RGS7-GNB5 complex in absence of glycine, in contrast GTPase activator activity of the RGS7-GNB5 complex is inhibited in presence of glycine. Interacts with RGS6. Detected in brain.

The protein resides in the membrane. In terms of biological role, enhances GTPase-activating protein (GAP) activity of regulator of G protein signaling (RGS) proteins, such as RGS7 and RGS9, hence involved in the termination of the signaling initiated by the G protein coupled receptors (GPCRs) by accelerating the GTP hydrolysis on the G-alpha subunits, thereby promoting their inactivation. Increases RGS7 GTPase-activating protein (GAP) activity, thereby regulating mood and cognition. Increases RGS9 GTPase-activating protein (GAP) activity, hence contributes to the deactivation of G protein signaling initiated by D(2) dopamine receptors. May play an important role in neuronal signaling, including in the parasympathetic, but not sympathetic, control of heart rate. In Rattus norvegicus (Rat), this protein is Guanine nucleotide-binding protein subunit beta-5 (Gnb5).